Reading from the N-terminus, the 219-residue chain is MLVLFGQPENWHEQDFRAVDDRVRGGSSISHLTEEKDSDGKSRAKFWGTLDTKTLGGAGFCSQATNIKDRTWNLKEFKGIELDIAKSDSYKYTFIIKDCHQDWETSDEKSSLSYEYDFTPIYSKEDQVVSIPFSEFKPTYRGRPVEGAPELDVSKITQFSIMIRSFFNSQSGDYELVLNSIRAIPKNVPFTTHKMSNEKQRLFDDYEKEIAGGSWCICQ.

This sequence belongs to the CIA30 family.

The protein localises to the cytoplasm. It is found in the nucleus. This is an uncharacterized protein from Schizosaccharomyces pombe (strain 972 / ATCC 24843) (Fission yeast).